The following is a 92-amino-acid chain: MANSPSAKKRAKQAEKRRSHNASLRSMVRTYIKNVVKAIAAKDLELAKTAYTAAVPVIDRMADKGIIHKNKAARHKSRLNAHIKALGEAAAA.

The segment at 1-23 is disordered; the sequence is MANSPSAKKRAKQAEKRRSHNAS. The span at 7 to 20 shows a compositional bias: basic residues; that stretch reads AKKRAKQAEKRRSH.

It belongs to the bacterial ribosomal protein bS20 family.

Binds directly to 16S ribosomal RNA. The polypeptide is Small ribosomal subunit protein bS20 (Ectopseudomonas mendocina (strain ymp) (Pseudomonas mendocina)).